A 718-amino-acid polypeptide reads, in one-letter code: Pentatricopeptide repeat-containing protein At1g22960, mitochondrial (718 aa).

Residues 1 to 11 (MILCLRLCLRA) constitute a mitochondrion transit peptide. PPR repeat units follow at residues 167-201 (ALKL…GFLP), 202-236 (SVRN…GIMP), 237-271 (TVIT…NIEF), 272-306 (SEVT…GFAV), 307-341 (TPYS…GIYP), 342-372 (TTST…MAAP), 373-407 (DVVS…DIHP), 408-442 (SIVT…LIFP), 443-477 (DVIT…GIKP), 478-512 (DGYA…DHHA), 514-548 (DLTI…GLVP), 549-583 (DHVT…RLYP), 584-618 (SVIT…GVRP), 619-653 (NVMT…GIPP), and 654-688 (NKYS…EIEP).

The protein belongs to the PPR family. P subfamily.

It localises to the mitochondrion. This is Pentatricopeptide repeat-containing protein At1g22960, mitochondrial from Arabidopsis thaliana (Mouse-ear cress).